A 307-amino-acid chain; its full sequence is Putative serine/threonine-protein phosphatase C22H10.04 (307 aa).

The Mn(2+) site is built by D51, H53, D79, and N111. Residue H112 is the Proton donor of the active site. Mn(2+) contacts are provided by H161 and H236.

It belongs to the PPP phosphatase family. PP-X subfamily. Mn(2+) serves as cofactor.

The enzyme catalyses O-phospho-L-seryl-[protein] + H2O = L-seryl-[protein] + phosphate. The catalysed reaction is O-phospho-L-threonyl-[protein] + H2O = L-threonyl-[protein] + phosphate. This Schizosaccharomyces pombe (strain 972 / ATCC 24843) (Fission yeast) protein is Putative serine/threonine-protein phosphatase C22H10.04.